The chain runs to 651 residues: Acetyl-coenzyme A synthetase (651 aa).

Residues R190 to K193 and T311 each bind CoA. ATP-binding positions include G387–P389, D411–T416, D508, and R523. S531 is a binding site for CoA. R534 serves as a coordination point for ATP. V545, H547, and V550 together coordinate Mg(2+). An N6-acetyllysine modification is found at K617.

Belongs to the ATP-dependent AMP-binding enzyme family. Requires Mg(2+) as cofactor. Acetylated. Deacetylation by the SIR2-homolog deacetylase activates the enzyme.

The enzyme catalyses acetate + ATP + CoA = acetyl-CoA + AMP + diphosphate. Its function is as follows. Catalyzes the conversion of acetate into acetyl-CoA (AcCoA), an essential intermediate at the junction of anabolic and catabolic pathways. AcsA undergoes a two-step reaction. In the first half reaction, AcsA combines acetate with ATP to form acetyl-adenylate (AcAMP) intermediate. In the second half reaction, it can then transfer the acetyl group from AcAMP to the sulfhydryl group of CoA, forming the product AcCoA. The chain is Acetyl-coenzyme A synthetase from Mycobacterium bovis (strain ATCC BAA-935 / AF2122/97).